We begin with the raw amino-acid sequence, 298 residues long: Lipoyl synthase (298 aa).

[4Fe-4S] cluster contacts are provided by C40, C45, C51, C67, C71, C74, and S280. In terms of domain architecture, Radical SAM core spans 53-269 (AVRRTATFMI…KEIALSKGFS (217 aa)).

It belongs to the radical SAM superfamily. Lipoyl synthase family. It depends on [4Fe-4S] cluster as a cofactor.

The protein resides in the cytoplasm. It carries out the reaction [[Fe-S] cluster scaffold protein carrying a second [4Fe-4S](2+) cluster] + N(6)-octanoyl-L-lysyl-[protein] + 2 oxidized [2Fe-2S]-[ferredoxin] + 2 S-adenosyl-L-methionine + 4 H(+) = [[Fe-S] cluster scaffold protein] + N(6)-[(R)-dihydrolipoyl]-L-lysyl-[protein] + 4 Fe(3+) + 2 hydrogen sulfide + 2 5'-deoxyadenosine + 2 L-methionine + 2 reduced [2Fe-2S]-[ferredoxin]. Its pathway is protein modification; protein lipoylation via endogenous pathway; protein N(6)-(lipoyl)lysine from octanoyl-[acyl-carrier-protein]. In terms of biological role, catalyzes the radical-mediated insertion of two sulfur atoms into the C-6 and C-8 positions of the octanoyl moiety bound to the lipoyl domains of lipoate-dependent enzymes, thereby converting the octanoylated domains into lipoylated derivatives. This is Lipoyl synthase from Geobacillus kaustophilus (strain HTA426).